A 200-amino-acid chain; its full sequence is Large ribosomal subunit protein uL13 (200 aa).

It belongs to the universal ribosomal protein uL13 family. As to quaternary structure, component of the large ribosomal subunit. Mature ribosomes consist of a small (40S) and a large (60S) subunit. The 40S subunit contains about 32 different proteins and 1 molecule of RNA (18S). The 60S subunit contains 45 different proteins and 3 molecules of RNA (25S, 5.8S and 5S).

The protein localises to the cytoplasm. Functionally, component of the ribosome, a large ribonucleoprotein complex responsible for the synthesis of proteins in the cell. The small ribosomal subunit (SSU) binds messenger RNAs (mRNAs) and translates the encoded message by selecting cognate aminoacyl-transfer RNA (tRNA) molecules. The large subunit (LSU) contains the ribosomal catalytic site termed the peptidyl transferase center (PTC), which catalyzes the formation of peptide bonds, thereby polymerizing the amino acids delivered by tRNAs into a polypeptide chain. The nascent polypeptides leave the ribosome through a tunnel in the LSU and interact with protein factors that function in enzymatic processing, targeting, and the membrane insertion of nascent chains at the exit of the ribosomal tunnel. This Candida albicans (strain SC5314 / ATCC MYA-2876) (Yeast) protein is Large ribosomal subunit protein uL13.